The chain runs to 481 residues: 3-isopropylmalate dehydratase large subunit (481 aa).

Positions 363, 423, and 426 each coordinate [4Fe-4S] cluster. The tract at residues 432 to 459 is disordered; sequence DQLKPGERSASTSNRNFEGRQGPGGRTH.

It belongs to the aconitase/IPM isomerase family. LeuC type 1 subfamily. As to quaternary structure, heterodimer of LeuC and LeuD. It depends on [4Fe-4S] cluster as a cofactor.

It carries out the reaction (2R,3S)-3-isopropylmalate = (2S)-2-isopropylmalate. It functions in the pathway amino-acid biosynthesis; L-leucine biosynthesis; L-leucine from 3-methyl-2-oxobutanoate: step 2/4. Functionally, catalyzes the isomerization between 2-isopropylmalate and 3-isopropylmalate, via the formation of 2-isopropylmaleate. The protein is 3-isopropylmalate dehydratase large subunit of Corynebacterium glutamicum (strain ATCC 13032 / DSM 20300 / JCM 1318 / BCRC 11384 / CCUG 27702 / LMG 3730 / NBRC 12168 / NCIMB 10025 / NRRL B-2784 / 534).